A 588-amino-acid chain; its full sequence is Arginine--tRNA ligase (588 aa).

The 'HIGH' region motif lies at 124 to 134; the sequence is PNVAKPMHVGH.

The protein belongs to the class-I aminoacyl-tRNA synthetase family. In terms of assembly, monomer.

The protein localises to the cytoplasm. It carries out the reaction tRNA(Arg) + L-arginine + ATP = L-arginyl-tRNA(Arg) + AMP + diphosphate. The sequence is that of Arginine--tRNA ligase from Maricaulis maris (strain MCS10) (Caulobacter maris).